The following is a 185-amino-acid chain: Sarcoplasmic calcium-binding proteins I, III, and IV (185 aa).

4 EF-hand domains span residues 5–41 (FQKQ…YKEV), 57–92 (SLED…TIAT), 102–137 (WCQN…FQLQ), and 138–173 (CADV…TSPA). Ca(2+) is bound by residues aspartate 19, asparagine 21, aspartate 23, serine 25, aspartate 30, aspartate 70, asparagine 72, aspartate 74, glutamate 81, aspartate 115, serine 117, aspartate 119, and glutamate 126.

Like parvalbumins, SCPs seem to be more abundant in fast contracting muscles, but no functional relationship can be established from this distribution. The polypeptide is Sarcoplasmic calcium-binding proteins I, III, and IV (Branchiostoma lanceolatum (Common lancelet)).